The chain runs to 658 residues: tRNA uridine 5-carboxymethylaminomethyl modification enzyme MnmG (658 aa).

Position 13 to 18 (13 to 18 (GAGHAG)) interacts with FAD. Position 285 to 299 (285 to 299 (GPRYCPSVEDKINRF)) interacts with NAD(+).

Belongs to the MnmG family. In terms of assembly, homodimer. Heterotetramer of two MnmE and two MnmG subunits. It depends on FAD as a cofactor.

The protein resides in the cytoplasm. Its function is as follows. NAD-binding protein involved in the addition of a carboxymethylaminomethyl (cmnm) group at the wobble position (U34) of certain tRNAs, forming tRNA-cmnm(5)s(2)U34. This is tRNA uridine 5-carboxymethylaminomethyl modification enzyme MnmG from Verminephrobacter eiseniae (strain EF01-2).